The primary structure comprises 484 residues: ATP synthase subunit beta (484 aa).

168-175 (GGAGVGKT) provides a ligand contact to ATP.

The protein belongs to the ATPase alpha/beta chains family. As to quaternary structure, F-type ATPases have 2 components, CF(1) - the catalytic core - and CF(0) - the membrane proton channel. CF(1) has five subunits: alpha(3), beta(3), gamma(1), delta(1), epsilon(1). CF(0) has three main subunits: a(1), b(2) and c(9-12). The alpha and beta chains form an alternating ring which encloses part of the gamma chain. CF(1) is attached to CF(0) by a central stalk formed by the gamma and epsilon chains, while a peripheral stalk is formed by the delta and b chains.

Its subcellular location is the cell membrane. It carries out the reaction ATP + H2O + 4 H(+)(in) = ADP + phosphate + 5 H(+)(out). Its function is as follows. Produces ATP from ADP in the presence of a proton gradient across the membrane. The catalytic sites are hosted primarily by the beta subunits. This chain is ATP synthase subunit beta, found in Renibacterium salmoninarum (strain ATCC 33209 / DSM 20767 / JCM 11484 / NBRC 15589 / NCIMB 2235).